Here is a 187-residue protein sequence, read N- to C-terminus: Threonylcarbamoyl-AMP synthase (187 aa).

In terms of domain architecture, YrdC-like spans 3–187 (EVLPADVAEL…AKSGQVIRKG (185 aa)).

It belongs to the SUA5 family. TsaC subfamily.

It localises to the cytoplasm. It catalyses the reaction L-threonine + hydrogencarbonate + ATP = L-threonylcarbamoyladenylate + diphosphate + H2O. Its function is as follows. Required for the formation of a threonylcarbamoyl group on adenosine at position 37 (t(6)A37) in tRNAs that read codons beginning with adenine. Catalyzes the conversion of L-threonine, HCO(3)(-)/CO(2) and ATP to give threonylcarbamoyl-AMP (TC-AMP) as the acyladenylate intermediate, with the release of diphosphate. The polypeptide is Threonylcarbamoyl-AMP synthase (Shewanella halifaxensis (strain HAW-EB4)).